A 291-amino-acid chain; its full sequence is ATP synthase gamma chain (291 aa).

This sequence belongs to the ATPase gamma chain family. As to quaternary structure, F-type ATPases have 2 components, CF(1) - the catalytic core - and CF(0) - the membrane proton channel. CF(1) has five subunits: alpha(3), beta(3), gamma(1), delta(1), epsilon(1). CF(0) has three main subunits: a, b and c.

It is found in the cell inner membrane. Functionally, produces ATP from ADP in the presence of a proton gradient across the membrane. The gamma chain is believed to be important in regulating ATPase activity and the flow of protons through the CF(0) complex. In Burkholderia thailandensis (strain ATCC 700388 / DSM 13276 / CCUG 48851 / CIP 106301 / E264), this protein is ATP synthase gamma chain.